We begin with the raw amino-acid sequence, 315 residues long: MSESLRIIFAGTPDFAARHLDALLSSGHNVVGVFTQPDRPAGRGKKLMPSPVKVLAEEKGLPVFQPVSLRPQENQQLVADLQADVMVVVAYGLILPKAVLEMPRLGCINVHGSLLPRWRGAAPIQRSLWAGDAETGVTIMQMDVGLDTGDMLYKLSCPITAEDTSGTLYDKLAELGPQGLITTLKQLADGTAKPEVQDETLVTYAEKLSKEEARIDWSLSAAQLERCIRAFNPWPMSWVEIEGQPVKVWKASVIDTATNAAPGTILEANKQGIQVATGDGILNLLSLQPAGKKAMSAQDLLNSRREWFVPGNRLV.

The tract at residues 2–189 is N-terminal domain; it reads SESLRIIFAG…LITTLKQLAD (188 aa). 113–116 serves as a coordination point for (6S)-5,6,7,8-tetrahydrofolate; sequence SLLP. The tract at residues 210–315 is C-terminal domain; sequence KEEARIDWSL…EWFVPGNRLV (106 aa).

The protein belongs to the Fmt family.

The enzyme catalyses L-methionyl-tRNA(fMet) + (6R)-10-formyltetrahydrofolate = N-formyl-L-methionyl-tRNA(fMet) + (6S)-5,6,7,8-tetrahydrofolate + H(+). Attaches a formyl group to the free amino group of methionyl-tRNA(fMet). The formyl group appears to play a dual role in the initiator identity of N-formylmethionyl-tRNA by promoting its recognition by IF2 and preventing the misappropriation of this tRNA by the elongation apparatus. The sequence is that of Methionyl-tRNA formyltransferase from Escherichia coli O157:H7.